Reading from the N-terminus, the 206-residue chain is Pyrrolidone-carboxylate peptidase (206 aa).

Active-site residues include Glu-76, Cys-139, and His-163.

Belongs to the peptidase C15 family. Homotetramer.

The protein resides in the cytoplasm. It carries out the reaction Release of an N-terminal pyroglutamyl group from a polypeptide, the second amino acid generally not being Pro.. In terms of biological role, removes 5-oxoproline from various penultimate amino acid residues except L-proline. The sequence is that of Pyrrolidone-carboxylate peptidase (pcp) from Pyrococcus horikoshii (strain ATCC 700860 / DSM 12428 / JCM 9974 / NBRC 100139 / OT-3).